We begin with the raw amino-acid sequence, 284 residues long: Signal peptidase I (284 aa).

A helical transmembrane segment spans residues 4 to 22 (NFPLLLVIAVAVCGLLALL). At 23–58 (DLVFFAPRRRSAIASYQGSVSQPDAVVIEKLNKEPL) the chain is on the cytoplasmic side. Residues 59 to 77 (LVEYGKSFFPVLFIVLVLR) form a helical membrane-spanning segment. Residues 78–284 (SFLVEPFQIP…PNFSRVGLIK (207 aa)) are Periplasmic-facing. Catalysis depends on residues Ser-90 and Lys-145.

The protein belongs to the peptidase S26 family.

Its subcellular location is the cell inner membrane. The catalysed reaction is Cleavage of hydrophobic, N-terminal signal or leader sequences from secreted and periplasmic proteins.. This is Signal peptidase I (lepB) from Pseudomonas fluorescens.